The chain runs to 304 residues: Recombination-associated protein RdgC (304 aa).

It belongs to the RdgC family.

It is found in the cytoplasm. It localises to the nucleoid. Functionally, may be involved in recombination. This is Recombination-associated protein RdgC from Shewanella baltica (strain OS223).